Here is a 763-residue protein sequence, read N- to C-terminus: ATP-dependent RNA helicase SUV3 homolog, mitochondrial (763 aa).

The N-terminal 43 residues, Met1–Lys43, are a transit peptide targeting the mitochondrion. One can recognise a Helicase ATP-binding domain in the interval Asn181–Glu321. An ATP-binding site is contributed by Gly194–Thr201. Positions Arg330 to Ala508 constitute a Helicase C-terminal domain. Positions Ala724–Lys763 are disordered. Over residues Leu727–Val741 the composition is skewed to polar residues.

Belongs to the helicase family. Mg(2+) serves as cofactor. The cofactor is Mn(2+).

It localises to the mitochondrion. It carries out the reaction ATP + H2O = ADP + phosphate + H(+). Its function is as follows. Major helicase player in mitochondrial RNA metabolism and maintenance. Likely component of the mitochondrial degradosome (mtEXO) complex, that degrades 3' overhang double-stranded RNA with a 3'-to-5' directionality in an ATP-dependent manner. ATPase and ATP-dependent multisubstrate helicase, able to unwind double-stranded (ds) DNA and RNA, and RNA/DNA heteroduplexes in the 5'-to-3' direction. Regulates mRNA stability and is required for the correct processing and maturation of mitochondrial transcripts. The sequence is that of ATP-dependent RNA helicase SUV3 homolog, mitochondrial from Drosophila melanogaster (Fruit fly).